Consider the following 360-residue polypeptide: DNA replication and repair protein RecF (360 aa).

An ATP-binding site is contributed by 30-37; that stretch reads GNNGSGKT.

It belongs to the RecF family.

The protein localises to the cytoplasm. Functionally, the RecF protein is involved in DNA metabolism; it is required for DNA replication and normal SOS inducibility. RecF binds preferentially to single-stranded, linear DNA. It also seems to bind ATP. This is DNA replication and repair protein RecF from Mannheimia succiniciproducens (strain KCTC 0769BP / MBEL55E).